Consider the following 100-residue polypeptide: Urease subunit gamma (100 aa).

The protein belongs to the urease gamma subunit family. Heterotrimer of UreA (gamma), UreB (beta) and UreC (alpha) subunits. Three heterotrimers associate to form the active enzyme.

It is found in the cytoplasm. The enzyme catalyses urea + 2 H2O + H(+) = hydrogencarbonate + 2 NH4(+). It functions in the pathway nitrogen metabolism; urea degradation; CO(2) and NH(3) from urea (urease route): step 1/1. The chain is Urease subunit gamma from Pseudomonas entomophila (strain L48).